A 105-amino-acid polypeptide reads, in one-letter code: AAFALPALATSFEKDFITHETVQEILKKVGSNSNGMLDEQTISALTGKTIISNPLLEEALFKSSNSINALGGTFPCGESCVWIPCISKVIGCACKSKVCYKNSLA.

The signal sequence occupies residues 1 to 9; that stretch reads AAFALPALA. Residues 10-71 constitute a propeptide that is removed on maturation; that stretch reads TSFEKDFITH…KSSNSINALG (62 aa). The segment at residues 72–102 is a cross-link (cyclopeptide (Gly-Asn)); that stretch reads GTFPCGESCVWIPCISKVIGCACKSKVCYKN. 3 disulfide bridges follow: Cys76-Cys92, Cys80-Cys94, and Cys85-Cys99. The propeptide occupies 103–105; that stretch reads SLA.

Post-translationally, this is a cyclic peptide.

Functionally, probably participates in a plant defense mechanism. The polypeptide is Cyclotide vibi-J (Viola biflora (Yellow wood violet)).